A 240-amino-acid polypeptide reads, in one-letter code: Tetraspanin-1 (240 aa).

The Cytoplasmic segment spans residues 1–9 (MQCFSFIKT). The helical transmembrane segment at 10 to 30 (IMILFNLLIFLCGAALLAVGI) threads the bilayer. Over 31-52 (WVSIDGASFLKIFGPLSSSAMQ) the chain is Extracellular. Residues 53 to 73 (FVNVGYFLIAAGAVVFALGFL) form a helical membrane-spanning segment. At 74–88 (GCYGAQTESKCALMT) the chain is on the cytoplasmic side. Residues 89 to 109 (FFFILLLIFIAEVAAAVVALV) traverse the membrane as a helical segment. Topologically, residues 110-210 (YTTMAEHFLT…QQLLYDIRTN (101 aa)) are extracellular. N-linked (GlcNAc...) asparagine glycosylation occurs at asparagine 154. Residues 211-231 (AVTVGGVAAGIGGLELAAMIV) traverse the membrane as a helical segment. The Cytoplasmic segment spans residues 232–240 (SMYLYCNLQ).

This sequence belongs to the tetraspanin (TM4SF) family. In terms of assembly, interacts with SLC19A2. Interacts with NTRK1/TRKA.

It localises to the lysosome membrane. Functionally, structural component of specialized membrane microdomains known as tetraspanin-enriched microdomains (TERMs), which act as platforms for receptor clustering and signaling. Participates thereby in diverse biological functions such as cell signal transduction, adhesion, migration and protein trafficking. Regulates neuronal differentiation in response to NGF by facilitating NGF-mediated activation of NTRK1/TRKA receptor tyrosine kinase and subsequent downstream signaling pathways. Plays a role in the inhibition of TNFalpha-induced apoptosis. Mechanistically, inhibits the NF-kappa-B signaling pathway by blocking phosphorylation of CHUK. Also promotes the stability of the thiamine transporter 1/SLC19A2 in intestinal epithelial cells leading to an increase of thiamine uptake process. In Macaca fascicularis (Crab-eating macaque), this protein is Tetraspanin-1 (TSPAN1).